Consider the following 418-residue polypeptide: Trafficking protein particle complex subunit 13 (418 aa).

Belongs to the TRAPPC13 family. In terms of assembly, part of the multisubunit TRAPP (transport protein particle) complex.

The polypeptide is Trafficking protein particle complex subunit 13 (Trappc13) (Rattus norvegicus (Rat)).